A 449-amino-acid chain; its full sequence is Phosphoglucosamine mutase (449 aa).

The active-site Phosphoserine intermediate is the serine 101. Mg(2+) contacts are provided by serine 101, aspartate 240, aspartate 242, and aspartate 244. Phosphoserine is present on serine 101.

Belongs to the phosphohexose mutase family. The cofactor is Mg(2+). Post-translationally, activated by phosphorylation.

It carries out the reaction alpha-D-glucosamine 1-phosphate = D-glucosamine 6-phosphate. Its function is as follows. Catalyzes the conversion of glucosamine-6-phosphate to glucosamine-1-phosphate. This chain is Phosphoglucosamine mutase, found in Streptococcus suis (strain 98HAH33).